An 815-amino-acid chain; its full sequence is G-type lectin S-receptor-like serine/threonine-protein kinase SD1-1 (815 aa).

Residues 1-22 (MREIHSLFSLSLFLISSSLSVA) form the signal peptide. At 23 to 438 (LDYNVITPKE…FAKIEFKGRE (416 aa)) the chain is on the extracellular side. The Bulb-type lectin domain occupies 25 to 152 (YNVITPKEFL…EEAVLWQSFD (128 aa)). N-linked (GlcNAc...) asparagine glycosylation is found at Asn-93, Asn-249, and Asn-265. The EGF-like domain maps to 288–326 (PEDECDYYSICGAYAVCGINSKNTPSCSCLQGFKPKSGR). 2 disulfide bridges follow: Cys-292/Cys-304 and Cys-298/Cys-314. Asn-329 and Asn-385 each carry an N-linked (GlcNAc...) asparagine glycan. The region spanning 345–428 (CEKKDAFVKF…FGQDVYIRMG (84 aa)) is the PAN domain. Disulfide bonds link Cys-378–Cys-403 and Cys-382–Cys-388. The chain crosses the membrane as a helical span at residues 439–459 (VVGMVVGSVVAIAVVLVVVFA). The Cytoplasmic portion of the chain corresponds to 460–815 (CFRKKIMKRY…EVSITMLQGR (356 aa)). Positions 500–783 (FSYVNFLGRG…SDSSLPHPTQ (284 aa)) constitute a Protein kinase domain. Residues 506–514 (LGRGGFGPV) and Lys-528 contribute to the ATP site. Ser-534 is modified (phosphoserine). Residues 589 to 606 (RRSTELDWKKRMNIINGV) form a caM-binding region. Asp-625 serves as the catalytic Proton acceptor. Position 642 is a phosphoserine (Ser-642). Thr-659 is modified (phosphothreonine). A phosphoserine mark is found at Ser-797 and Ser-803. Thr-810 is modified (phosphothreonine).

The protein belongs to the protein kinase superfamily. Ser/Thr protein kinase family. In terms of assembly, interacts with PUB9, PUB13 and PUB14.

The protein localises to the cell membrane. It catalyses the reaction L-seryl-[protein] + ATP = O-phospho-L-seryl-[protein] + ADP + H(+). It carries out the reaction L-threonyl-[protein] + ATP = O-phospho-L-threonyl-[protein] + ADP + H(+). The polypeptide is G-type lectin S-receptor-like serine/threonine-protein kinase SD1-1 (SD11) (Arabidopsis thaliana (Mouse-ear cress)).